A 434-amino-acid polypeptide reads, in one-letter code: 3-phosphoshikimate 1-carboxyvinyltransferase (434 aa).

3-phosphoshikimate is bound by residues Lys-22, Ser-23, and Arg-27. Lys-22 is a phosphoenolpyruvate binding site. 2 residues coordinate phosphoenolpyruvate: Gly-93 and Arg-121. Residues Ser-168, Ser-169, Gln-170, Ser-199, Asp-320, and Lys-347 each contribute to the 3-phosphoshikimate site. Gln-170 is a phosphoenolpyruvate binding site. Asp-320 functions as the Proton acceptor in the catalytic mechanism. 3 residues coordinate phosphoenolpyruvate: Arg-351, Arg-394, and Lys-419.

Belongs to the EPSP synthase family. Monomer.

The protein localises to the cytoplasm. The enzyme catalyses 3-phosphoshikimate + phosphoenolpyruvate = 5-O-(1-carboxyvinyl)-3-phosphoshikimate + phosphate. It participates in metabolic intermediate biosynthesis; chorismate biosynthesis; chorismate from D-erythrose 4-phosphate and phosphoenolpyruvate: step 6/7. Functionally, catalyzes the transfer of the enolpyruvyl moiety of phosphoenolpyruvate (PEP) to the 5-hydroxyl of shikimate-3-phosphate (S3P) to produce enolpyruvyl shikimate-3-phosphate and inorganic phosphate. In Burkholderia lata (strain ATCC 17760 / DSM 23089 / LMG 22485 / NCIMB 9086 / R18194 / 383), this protein is 3-phosphoshikimate 1-carboxyvinyltransferase.